The primary structure comprises 209 residues: High frequency lysogenization protein HflD homolog (209 aa).

Residues 79–121 (QGLNAELTRYTLSLMVLERKLNSAKGAMDTLGDRIAGLQRQLD) are a coiled coil.

Belongs to the HflD family.

It is found in the cytoplasm. The protein localises to the cell inner membrane. In Enterobacter sp. (strain 638), this protein is High frequency lysogenization protein HflD homolog.